A 397-amino-acid chain; its full sequence is Diphosphomevalonate decarboxylase (397 aa).

Residues 19-22 (YWGK), R74, 153-158 (SGSACR), and T209 contribute to the (R)-5-diphosphomevalonate site. Positions 378–397 (GPGPQDTKSSLIDPETGLPR) are disordered.

It belongs to the diphosphomevalonate decarboxylase family. Homodimer.

The enzyme catalyses (R)-5-diphosphomevalonate + ATP = isopentenyl diphosphate + ADP + phosphate + CO2. It participates in isoprenoid biosynthesis; isopentenyl diphosphate biosynthesis via mevalonate pathway; isopentenyl diphosphate from (R)-mevalonate: step 3/3. Diphosphomevalonate decarboxylase; part of the second module of ergosterol biosynthesis pathway that includes the middle steps of the pathway. The second module is carried out in the vacuole and involves the formation of farnesyl diphosphate, which is also an important intermediate in the biosynthesis of ubiquinone, dolichol, heme and prenylated proteins. Activity by the mevalonate kinase ERG12 first converts mevalonate into 5-phosphomevalonate. 5-phosphomevalonate is then further converted to 5-diphosphomevalonate by the phosphomevalonate kinase ERG8. The diphosphomevalonate decarboxylase MVD1/ERG19 then produces isopentenyl diphosphate. The isopentenyl-diphosphate delta-isomerase IDI1 then catalyzes the 1,3-allylic rearrangement of the homoallylic substrate isopentenyl (IPP) to its highly electrophilic allylic isomer, dimethylallyl diphosphate (DMAPP). Finally the farnesyl diphosphate synthase ERG20 catalyzes the sequential condensation of isopentenyl pyrophosphate with dimethylallyl pyrophosphate, and then with the resultant geranylpyrophosphate to the ultimate product farnesyl pyrophosphate. The polypeptide is Diphosphomevalonate decarboxylase (Eremothecium gossypii (strain ATCC 10895 / CBS 109.51 / FGSC 9923 / NRRL Y-1056) (Yeast)).